Here is a 2052-residue protein sequence, read N- to C-terminus: Genome polyprotein (2052 aa).

2 short sequence motifs ((L)YPX(n)L motif) span residues 167 to 171 and 200 to 205; these read YPHGL and YPVWEL. Residues 502–522 are disordered; sequence TVSTEQNVPDPQVGIKGKANR. Residues 760–830 form an involved in P1-2A pentamerization region; that stretch reads MMSRIAAGDL…PRKMKGLFSQ (71 aa). Residues 1005–1025 form a helical membrane-spanning segment; the sequence is TVEIINIVLCFIKSGILLYVI. Residues 1037-1064 form a membrane-penetrating ability region; it reads IGLLRVMNYADIGCSVISCGKVFSKMLE. Residues 1121–1146 adopt a coiled-coil conformation; sequence KKKDVLNILKDNQQKIEKAIEEADNF. A helical membrane pass occupies residues 1296 to 1316; the sequence is WVAVGAAVGILGLLVGGWFVY. Y1333 is modified (O-(5'-phospho-RNA)-tyrosine). The Peptidase C3 domain occupies 1348 to 1562; that stretch reads DPVESQSTLE…VAKLITQEMF (215 aa). Catalysis depends on for protease 3C activity residues H1397, D1437, and C1525. One can recognise a RdRp catalytic domain in the interval 1810 to 1931; that stretch reads DVGLDLDFSA…VFSRDVQIDN (122 aa).

The protein belongs to the picornaviridae polyprotein family. Homodimer. Homomultimer; probably interacts with membranes in a multimeric form. Seems to assemble into amyloid-like fibers. In terms of assembly, homodimer. Monomer. Interacts with protein 3CD. As to quaternary structure, interacts with host ACBD3. Interacts with protein 3AB. In terms of assembly, interacts with human MAVS. As to quaternary structure, homodimer; disulfide-linked. Homopentamer. Homooligomer. In terms of assembly, interacts with capsid protein VP2. Interacts with capsid protein VP3. As to quaternary structure, interacts with capsid protein VP1. Interacts with capsid protein VP3. Interacts with capsid protein VP1. Interacts with capsid protein VP2. Post-translationally, specific enzymatic cleavages by viral protease in vivo yield a variety of precursors and mature proteins. Polyprotein processing intermediates are produced, such as P1-2A which is a functional precursor of the structural proteins, VP0 which is a VP4-VP2 precursor, VP1-2A precursor, 3ABC precursor which is a stable and catalytically active precursor of 3A, 3B and 3C proteins, 3AB and 3CD precursors. The assembly signal 2A is removed from VP1-2A by a host protease, possibly host Cathepsin L. This cleavage occurs over a region of 3 amino-acids probably generating VP1 proteins with heterogeneous C-termini. During virion maturation, immature virions are rendered infectious following cleavage of VP0 into VP4 and VP2. This maturation seems to be an autocatalytic event triggered by the presence of RNA in the capsid and is followed by a conformational change of the particle. In terms of processing, the assembly signal 2A is removed from VP1-2A by a host protease, possibly host Cathepsin L in naked virions. This cleavage does not occur in enveloped virions. This cleavage occurs over a region of 3 amino-acids probably generating VP1 proteins with heterogeneous C-termini. Post-translationally, VPg is uridylylated prior to priming replication into VPg-pUpU. Unlike other picornaviruses, does not seem to be myristoylated.

Its subcellular location is the virion. It localises to the host endosome. It is found in the host multivesicular body. The protein localises to the host membrane. The protein resides in the host mitochondrion outer membrane. Its subcellular location is the host cytoplasm. It localises to the host cytoplasmic vesicle membrane. It carries out the reaction RNA(n) + a ribonucleoside 5'-triphosphate = RNA(n+1) + diphosphate. It catalyses the reaction a ribonucleoside 5'-triphosphate + H2O = a ribonucleoside 5'-diphosphate + phosphate + H(+). The enzyme catalyses Selective cleavage of Gln-|-Gly bond in the poliovirus polyprotein. In other picornavirus reactions Glu may be substituted for Gln, and Ser or Thr for Gly.. Its function is as follows. Capsid proteins VP1, VP2, and VP3 form a closed capsid enclosing the viral positive strand RNA genome. All these proteins contain a beta-sheet structure called beta-barrel jelly roll. Together they form an icosahedral capsid (T=3) composed of 60 copies of each VP1, VP2, and VP3, with a diameter of approximately 300 Angstroms. VP1 is situated at the 12 fivefold axes, whereas VP2 and VP3 are located at the quasi-sixfold axes. The naked capsid interacts with the host receptor HAVCR1 to provide virion attachment to and probably entry into the target cell. In terms of biological role, VP0 precursor is a component of the immature procapsids. Plays a role in the assembly of the 12 pentamers into an icosahedral structure. Has not been detected in mature virions, supposedly owing to its small size. Functionally, precursor component of immature procapsids that corresponds to an extended form of the structural protein VP1. After maturation, possibly by the host Cathepsin L, the assembly signal 2A is cleaved to give rise to the mature VP1 protein. Its function is as follows. Functions as a viroporin. Affects membrane integrity and causes an increase in membrane permeability. Involved in host intracellular membrane rearrangements probably to give rise to the viral factories. Does not disrupt calcium homeostasis or glycoprotein trafficking. Antagonizes the innate immune response of the host by suppressing IFN-beta synthesis, which it achieves by interfering with the RIG-I/IFIH1 pathway. In terms of biological role, affects membrane integrity and causes an increase in membrane permeability. Associates with and induces structural rearrangements of intracellular membranes. Displays RNA-binding activity. Functionally, the precursor 3ABC is targeted to the mitochondrial membrane where protease 3C activity cleaves and inhibits the host antiviral protein MAVS, thereby disrupting activation of IRF3 through the IFIH1/MDA5 pathway. In vivo, the protease activity of 3ABC precursor is more efficient in cleaving the 2BC precursor than that of protein 3C. The 3ABC precursor may therefore play a role in the proteolytic processing of the polyprotein. Possible viroporin. Its function is as follows. Interacts with the 3CD precursor and with RNA structures found at both the 5'- and 3'-termini of the viral genome. Since the 3AB precursor contains the hydrophobic domain 3A, it probably anchors the whole viral replicase complex to intracellular membranes on which viral RNA synthesis occurs. In terms of biological role, may serve as membrane anchor to the 3AB and 3ABC precursors via its hydrophobic domain. May interact with RNA. Acts as a primer for viral RNA replication and remains covalently bound to viral genomic RNA. VPg is uridylylated prior to priming replication into VPg-pUpU. The VPg-pUpU is then used as primer on the genomic RNA poly(A) by the RNA-dependent RNA polymerase to replicate the viral genome. Functionally, cysteine protease that generates mature viral proteins from the precursor polyprotein. In addition to its proteolytic activity, it binds to viral RNA, and thus influences viral genome replication. RNA and substrate bind cooperatively to the protease. Cleaves IKBKG/NEMO to impair innate immune signaling. Cleaves host PABPC1 which may participate in the switch of viral translation to RNA synthesis. Its function is as follows. Interacts with the 3AB precursor and with RNA structures found at both the 5'- and 3'-termini of the viral genome. Disrupts TLR3 signaling by degrading the host adapter protein TICAM1/TRIF. In terms of biological role, RNA-directed RNA polymerase 3D-POL replicates genomic and antigenomic RNA by recognizing replications specific signals. In Homo sapiens (Human), this protein is Genome polyprotein.